The following is a 213-amino-acid chain: Octanoyltransferase (213 aa).

Positions 32-207 (ENSHDEIWLV…NILALLNNPP (176 aa)) constitute a BPL/LPL catalytic domain. Substrate contacts are provided by residues 71–78 (RGGQVTYH), 138–140 (SLG), and 151–153 (GLA). Cysteine 169 (acyl-thioester intermediate) is an active-site residue.

This sequence belongs to the LipB family.

The protein resides in the cytoplasm. It carries out the reaction octanoyl-[ACP] + L-lysyl-[protein] = N(6)-octanoyl-L-lysyl-[protein] + holo-[ACP] + H(+). It participates in protein modification; protein lipoylation via endogenous pathway; protein N(6)-(lipoyl)lysine from octanoyl-[acyl-carrier-protein]: step 1/2. Its function is as follows. Catalyzes the transfer of endogenously produced octanoic acid from octanoyl-acyl-carrier-protein onto the lipoyl domains of lipoate-dependent enzymes. Lipoyl-ACP can also act as a substrate although octanoyl-ACP is likely to be the physiological substrate. In Salmonella paratyphi A (strain ATCC 9150 / SARB42), this protein is Octanoyltransferase.